A 101-amino-acid polypeptide reads, in one-letter code: uncharacterized protein (101 aa).

2 consecutive transmembrane segments (helical) span residues 10–30 (VLAILVCQFIGPNVFIIIGSI) and 67–87 (IILGFIGIYVFLFVLLFILSI).

The protein resides in the membrane. This is an uncharacterized protein from Acanthamoeba polyphaga (Amoeba).